The chain runs to 512 residues: D-alanine--D-alanyl carrier protein ligase (512 aa).

152 to 153 (TS) contributes to the ATP binding site. Asp199 provides a ligand contact to D-alanine. Position 294 to 299 (294 to 299 (NAYGPT)) interacts with ATP. Residue Val303 participates in D-alanine binding. Residues Asp385, 397–400 (YGGR), and Lys499 each bind ATP. Lys499 is a binding site for D-alanine.

The protein belongs to the ATP-dependent AMP-binding enzyme family. DltA subfamily.

It localises to the cytoplasm. It catalyses the reaction holo-[D-alanyl-carrier protein] + D-alanine + ATP = D-alanyl-[D-alanyl-carrier protein] + AMP + diphosphate. It functions in the pathway cell wall biogenesis; lipoteichoic acid biosynthesis. Catalyzes the first step in the D-alanylation of lipoteichoic acid (LTA), the activation of D-alanine and its transfer onto the D-alanyl carrier protein (Dcp) DltC. In an ATP-dependent two-step reaction, forms a high energy D-alanyl-AMP intermediate, followed by transfer of the D-alanyl residue as a thiol ester to the phosphopantheinyl prosthetic group of the Dcp. D-alanylation of LTA plays an important role in modulating the properties of the cell wall in Gram-positive bacteria, influencing the net charge of the cell wall. This Streptococcus pyogenes serotype M4 (strain MGAS10750) protein is D-alanine--D-alanyl carrier protein ligase.